The chain runs to 148 residues: Snaclec B2 (148 aa).

The first 24 residues, 1–24 (MGRLISVSFGLLVVFLSLSGTGAA), serve as a signal peptide directing secretion. Cystine bridges form between Cys27/Cys38, Cys55/Cys144, and Cys121/Cys136. The C-type lectin domain maps to 34 to 145 (YDQHCYKVFD…CRLLGHFVCK (112 aa)).

Belongs to the snaclec family. Heterodimer; disulfide-linked. As to expression, expressed by the venom gland.

It is found in the secreted. Interferes with one step of hemostasis (modulation of platelet aggregation, or coagulation cascade, for example). In Macrovipera lebetinus (Levantine viper), this protein is Snaclec B2.